A 307-amino-acid polypeptide reads, in one-letter code: Aspartate carbamoyltransferase catalytic subunit (307 aa).

Residues Arg-59 and Thr-60 each coordinate carbamoyl phosphate. Position 87 (Lys-87) interacts with L-aspartate. Residues Arg-109, His-137, and Gln-140 each contribute to the carbamoyl phosphate site. Residues Arg-173 and Arg-223 each coordinate L-aspartate. The carbamoyl phosphate site is built by Gly-266 and Pro-267.

It belongs to the aspartate/ornithine carbamoyltransferase superfamily. ATCase family. Heterododecamer (2C3:3R2) of six catalytic PyrB chains organized as two trimers (C3), and six regulatory PyrI chains organized as three dimers (R2).

The enzyme catalyses carbamoyl phosphate + L-aspartate = N-carbamoyl-L-aspartate + phosphate + H(+). It functions in the pathway pyrimidine metabolism; UMP biosynthesis via de novo pathway; (S)-dihydroorotate from bicarbonate: step 2/3. Functionally, catalyzes the condensation of carbamoyl phosphate and aspartate to form carbamoyl aspartate and inorganic phosphate, the committed step in the de novo pyrimidine nucleotide biosynthesis pathway. The chain is Aspartate carbamoyltransferase catalytic subunit from Helicobacter pylori (strain ATCC 700392 / 26695) (Campylobacter pylori).